The primary structure comprises 538 residues: Putative cysteine ligase BshC (538 aa).

Positions 460 to 484 (KINEQIELLERMLKRNVEKKHEVEL) form a coiled coil.

This sequence belongs to the BshC family.

Its function is as follows. Involved in bacillithiol (BSH) biosynthesis. May catalyze the last step of the pathway, the addition of cysteine to glucosamine malate (GlcN-Mal) to generate BSH. The sequence is that of Putative cysteine ligase BshC from Bacillus cereus (strain ZK / E33L).